A 175-amino-acid chain; its full sequence is ATP synthase subunit b (175 aa).

Residues leucine 20–tryptophan 40 traverse the membrane as a helical segment.

Belongs to the ATPase B chain family. As to quaternary structure, F-type ATPases have 2 components, F(1) - the catalytic core - and F(0) - the membrane proton channel. F(1) has five subunits: alpha(3), beta(3), gamma(1), delta(1), epsilon(1). F(0) has four main subunits: a(1), b(2) and c(10-14). The alpha and beta chains form an alternating ring which encloses part of the gamma chain. F(1) is attached to F(0) by a central stalk formed by the gamma and epsilon chains, while a peripheral stalk is formed by the delta and b chains.

It is found in the cell inner membrane. Functionally, f(1)F(0) ATP synthase produces ATP from ADP in the presence of a proton or sodium gradient. F-type ATPases consist of two structural domains, F(1) containing the extramembraneous catalytic core and F(0) containing the membrane proton channel, linked together by a central stalk and a peripheral stalk. During catalysis, ATP synthesis in the catalytic domain of F(1) is coupled via a rotary mechanism of the central stalk subunits to proton translocation. Its function is as follows. Component of the F(0) channel, it forms part of the peripheral stalk, linking F(1) to F(0). The polypeptide is ATP synthase subunit b (Chlorobium chlorochromatii (strain CaD3)).